A 666-amino-acid polypeptide reads, in one-letter code: 7SK snRNA methylphosphate capping enzyme (666 aa).

The residue at position 1 (M1) is an N-acetylmethionine. Residues 1 to 10 (MIEMAAEKEP) are compositionally biased toward basic and acidic residues. Residues 1-141 (MIEMAAEKEP…GSGGSFKHPA (141 aa)) are disordered. Low complexity predominate over residues 50-61 (GPGPRAHSAGAA). S57 bears the Phosphoserine mark. R91 bears the Omega-N-methylarginine mark. Residues S126, S150, and S154 each carry the phosphoserine modification. Residue T188 is modified to Phosphothreonine. 3 positions are modified to phosphoserine: S191, S192, and S229. Basic residues predominate over residues 235–244 (RKRHRHRGPH). Residues 235–291 (RKRHRHRGPHHQQQQQASGGNDSNAAVLPTDPLTPSLHGEGATQQQQNRGQNRDAPQ) form a disordered region. Positions 245–254 (HQQQQQASGG) are enriched in low complexity. Residue T268 is modified to Phosphothreonine. Phosphoserine occurs at positions 307 and 321. Residues 309 to 337 (LPSALQGSSGSLSAPPAASVTSAPSTSSS) show a composition bias toward low complexity. The segment at 309–383 (LPSALQGSSG…HHHPLPATGF (75 aa)) is disordered. The span at 338–347 (SRHRKRRRTS) shows a compositional bias: basic residues. Position 368 is a phosphoserine (S368). S-adenosyl-L-methionine contacts are provided by residues Y399, R410, 428 to 430 (GCN), 451 to 452 (DI), 536 to 537 (NY), and F558. The 256-residue stretch at 408-663 (DVRLRVLKPE…PVYLFHKARS (256 aa)) folds into the Bin3-type SAM domain. A Glycyl lysine isopeptide (Lys-Gly) (interchain with G-Cter in SUMO2) cross-link involves residue K620.

Belongs to the methyltransferase superfamily. In terms of assembly, core component of the 7SK RNP complex, at least composed of 7SK RNA, LARP7, MEPCE, HEXIM1 (or HEXIM2) and P-TEFb (composed of CDK9 and CCNT1/cyclin-T1). Interacts with METTL16. Interacts with RBM7; upon genotoxic stress this interaction is enhanced, triggering the release of inactive P-TEFb complex from the core, yielding to P-TEFb complex activation. In terms of processing, dephosphorylated at Ser-126 by the PNUTS-PP1 complex, promoting RNA polymerase II transcription pause-release.

It is found in the nucleus. It catalyses the reaction a 5'-end triphospho-guanosine-ribonucleotide-snRNA + S-adenosyl-L-methionine = a 5'-end methyltriphosphate-guanosine-ribonucleotide-snRNA + S-adenosyl-L-homocysteine. In terms of biological role, S-adenosyl-L-methionine-dependent methyltransferase that adds a methylphosphate cap at the 5'-end of 7SK snRNA (7SK RNA), leading to stabilize it. Also has a non-enzymatic function as part of the 7SK RNP complex: the 7SK RNP complex sequesters the positive transcription elongation factor b (P-TEFb) in a large inactive 7SK RNP complex preventing RNA polymerase II phosphorylation and subsequent transcriptional elongation. The 7SK RNP complex also promotes snRNA gene transcription by RNA polymerase II via interaction with the little elongation complex (LEC). In the 7SK RNP complex, MEPCE is required to stabilize 7SK RNA and facilitate the assembly of 7SK RNP complex. MEPCE has a non-enzymatic function in the 7SK RNP complex; it has a non-enzymatic function; interaction with LARP7 within the 7SK RNP complex occluding its catalytic center. Also required for stability of U6 snRNAs. This Mus musculus (Mouse) protein is 7SK snRNA methylphosphate capping enzyme.